A 108-amino-acid polypeptide reads, in one-letter code: uncharacterized protein (108 aa).

Residues 75 to 94 form a disordered region; it reads TPQVSSFPSSTTSLSHSCTT. Positions 79 to 94 are enriched in low complexity; sequence SSFPSSTTSLSHSCTT.

This is an uncharacterized protein from Homo sapiens (Human).